Here is a 291-residue protein sequence, read N- to C-terminus: Taste receptor type 2 member 16 (291 aa).

A topological domain (extracellular) is located at residue Met1. A helical transmembrane segment spans residues 2 to 22 (IPIQLTVFFMIIYVLESLTII). At 23-41 (VQSSLIVAVLGREWLQVRR) the chain is on the cytoplasmic side. The chain crosses the membrane as a helical span at residues 42–62 (LMPVDMILISLGISRFCLQWA). The Extracellular portion of the chain corresponds to 63–84 (SMLNNFCSYFNLNYVLCNLTIT). N-linked (GlcNAc...) asparagine glycosylation occurs at Asn80. A helical membrane pass occupies residues 85–105 (WEFFNILTFWLNSLLTVFYCI). Residues 106–125 (KASSFTHHIFLWLRWRILRL) are Cytoplasmic-facing. The chain crosses the membrane as a helical span at residues 126–146 (FPWILLGSLMITCVTIIPSAI). At 147–182 (GNYIQIQLLTMEHLPRNSTVTDKLEKFHQYQFQAHT) the chain is on the extracellular side. An N-linked (GlcNAc...) asparagine glycan is attached at Asn163. The chain crosses the membrane as a helical span at residues 183–203 (VALVIPFILFLASTILLMASL). The Cytoplasmic portion of the chain corresponds to 204–228 (TKQIQHHSTGHCNPSMKAHFTALRS). The helical transmembrane segment at 229–249 (LAVLFIVFTSYFLTILITIIG) threads the bilayer. The Extracellular portion of the chain corresponds to 250 to 257 (TLFDKRCW). A helical transmembrane segment spans residues 258 to 278 (LWVWEAFVYAFILMHSTSLML). The Cytoplasmic portion of the chain corresponds to 279 to 291 (SSPTLKRILKGKC).

The protein belongs to the G-protein coupled receptor T2R family. Interacts with RTP3 and RTP4.

Its subcellular location is the cell membrane. Functionally, receptor that may play a role in the perception of bitterness and is gustducin-linked. May play a role in sensing the chemical composition of the gastrointestinal content. The activity of this receptor may stimulate alpha gustducin, mediate PLC-beta-2 activation and lead to the gating of TRPM5. The sequence is that of Taste receptor type 2 member 16 (TAS2R16) from Pan paniscus (Pygmy chimpanzee).